The chain runs to 206 residues: Large ribosomal subunit protein uL4 (206 aa).

The tract at residues 63-97 is disordered; the sequence is MYKQKGTGRARHHSARAPQFRGGGKAHGPVVRSHE. The segment covering 64–77 has biased composition (basic residues); it reads YKQKGTGRARHHSA.

This sequence belongs to the universal ribosomal protein uL4 family. In terms of assembly, part of the 50S ribosomal subunit.

Its function is as follows. One of the primary rRNA binding proteins, this protein initially binds near the 5'-end of the 23S rRNA. It is important during the early stages of 50S assembly. It makes multiple contacts with different domains of the 23S rRNA in the assembled 50S subunit and ribosome. Forms part of the polypeptide exit tunnel. The polypeptide is Large ribosomal subunit protein uL4 (Rhizobium leguminosarum bv. trifolii (strain WSM2304)).